The chain runs to 304 residues: Rhomboid-like protein 19 (304 aa).

Transmembrane regions (helical) follow at residues Leu23–Ile43, Gly58–Gly78, Phe93–Tyr113, Val120–Ile140, Trp158–Leu175, and Ala179–Leu198. Residues Ser247–Val304 are disordered. Over residues Glu266 to Thr284 the composition is skewed to basic and acidic residues.

This sequence belongs to the peptidase S54 family.

The protein resides in the membrane. In terms of biological role, probable rhomboid-type serine protease that catalyzes intramembrane proteolysis. The protein is Rhomboid-like protein 19 of Arabidopsis thaliana (Mouse-ear cress).